Consider the following 329-residue polypeptide: Serpentine receptor class alpha-2 (329 aa).

7 consecutive transmembrane segments (helical) span residues 25–45 (FVYL…VKIL), 57–77 (ILLV…GIEA), 104–124 (YYKI…GLLI), 144–164 (CAVI…LIVW), 188–208 (HYFT…TFIL), 240–260 (FLTV…IVLV), and 273–293 (LLVV…VILV).

The protein belongs to the nematode receptor-like protein sra family.

It localises to the membrane. The sequence is that of Serpentine receptor class alpha-2 (sra-2) from Caenorhabditis elegans.